Here is a 412-residue protein sequence, read N- to C-terminus: Serine hydroxymethyltransferase (412 aa).

(6S)-5,6,7,8-tetrahydrofolate is bound by residues Leu114 and 118 to 120; that span reads GHL. Lys223 is subject to N6-(pyridoxal phosphate)lysine.

This sequence belongs to the SHMT family. As to quaternary structure, homodimer. Requires pyridoxal 5'-phosphate as cofactor.

It is found in the cytoplasm. It carries out the reaction (6R)-5,10-methylene-5,6,7,8-tetrahydrofolate + glycine + H2O = (6S)-5,6,7,8-tetrahydrofolate + L-serine. It functions in the pathway one-carbon metabolism; tetrahydrofolate interconversion. It participates in amino-acid biosynthesis; glycine biosynthesis; glycine from L-serine: step 1/1. Catalyzes the reversible interconversion of serine and glycine with tetrahydrofolate (THF) serving as the one-carbon carrier. This reaction serves as the major source of one-carbon groups required for the biosynthesis of purines, thymidylate, methionine, and other important biomolecules. Also exhibits THF-independent aldolase activity toward beta-hydroxyamino acids, producing glycine and aldehydes, via a retro-aldol mechanism. The polypeptide is Serine hydroxymethyltransferase (Mesoplasma florum (strain ATCC 33453 / NBRC 100688 / NCTC 11704 / L1) (Acholeplasma florum)).